The following is a 255-amino-acid chain: HTH-type transcriptional regulator SkgA (255 aa).

Residues 3-72 (VYTVKQMARL…LKDIQAALDQ (70 aa)) enclose the HTH merR-type domain. Residues 6 to 25 (VKQMARLSGVSVRALHHYDA) constitute a DNA-binding region (H-T-H motif).

Its function is as follows. Regulates the induction of katG (catalase-peroxidase) in stationary phase. This chain is HTH-type transcriptional regulator SkgA (skgA), found in Caulobacter vibrioides (strain ATCC 19089 / CIP 103742 / CB 15) (Caulobacter crescentus).